The following is a 339-amino-acid chain: 4-hydroxy-2-oxovalerate aldolase (339 aa).

Residues 8–260 form the Pyruvate carboxyltransferase domain; the sequence is IILHDMCLRD…STDVDVFKLM (253 aa). A substrate-binding site is contributed by 16–17; the sequence is RD. A Mn(2+)-binding site is contributed by Asp-17. The active-site Proton acceptor is His-20. Substrate contacts are provided by Ser-170 and His-199. Mn(2+) contacts are provided by His-199 and His-201. Position 290 (Tyr-290) interacts with substrate.

This sequence belongs to the 4-hydroxy-2-oxovalerate aldolase family.

It carries out the reaction (S)-4-hydroxy-2-oxopentanoate = acetaldehyde + pyruvate. In Shewanella woodyi (strain ATCC 51908 / MS32), this protein is 4-hydroxy-2-oxovalerate aldolase.